A 134-amino-acid chain; its full sequence is MIEVGEYKVKEGLYYTKDHEWAKVLDDGTVLVGITDYAQKELGDLAYVELPEVGKEVNKGDVLCEIESVKAVSEVYAPVSGEVIEVNEALEDSPELLNEDPYENWIAKLKPSNLDEELKELMDAEAYAKYLESL.

The region spanning 29–110 (TVLVGITDYA…PYENWIAKLK (82 aa)) is the Lipoyl-binding domain. At lysine 70 the chain carries N6-lipoyllysine.

It belongs to the GcvH family. In terms of assembly, the glycine cleavage system is composed of four proteins: P, T, L and H. (R)-lipoate is required as a cofactor.

Its function is as follows. The glycine cleavage system catalyzes the degradation of glycine. The H protein shuttles the methylamine group of glycine from the P protein to the T protein. The sequence is that of Probable glycine cleavage system H protein from Thermococcus gammatolerans (strain DSM 15229 / JCM 11827 / EJ3).